The sequence spans 485 residues: Cytosol non-specific dipeptidase (485 aa).

A Zn(2+)-binding site is contributed by histidine 76. Aspartate 78 is an active-site residue. Aspartate 115 lines the Zn(2+) pocket. The Proton acceptor role is filled by glutamate 145. Zn(2+) is bound by residues glutamate 146 and aspartate 169. Position 296 is an N6-acetyllysine (lysine 296). Histidine 457 contributes to the Zn(2+) binding site.

It belongs to the peptidase M20C family. Zn(2+) is required as a cofactor. It depends on Co(2+) as a cofactor.

It catalyses the reaction Hydrolysis of dipeptides, preferentially hydrophobic dipeptides including prolyl amino acids.. Its activity is regulated as follows. Inhibited by metal chelators. In terms of biological role, dipeptidase with broad substrate specificity. Requires dipeptide substrates with an unblocked N-terminus and the amino group in the alpha or beta position. Non-protein amino acids and proline are not accepted in the C-terminal position, whereas some dipeptide amides and formyl amino acids are hydrolyzed. Also shows cysteinylglycinase activity, which is sufficient for E.coli to utilize cysteinylglycine as a cysteine source. This chain is Cytosol non-specific dipeptidase (pepD), found in Escherichia coli (strain K12).